A 520-amino-acid polypeptide reads, in one-letter code: Sterile alpha motif domain-containing protein 3 (520 aa).

Positions 4–71 constitute an SAM domain; it reads WSVDQVCKWL…KYKQGNQELK (68 aa). A disordered region spans residues 67-104; the sequence is NQELKPTGGPADTSTLTPAQAAPEHEQNPSPTSHGDQT. The span at 94–104 shows a compositional bias: polar residues; it reads NPSPTSHGDQT.

This chain is Sterile alpha motif domain-containing protein 3 (Samd3), found in Mus musculus (Mouse).